A 251-amino-acid polypeptide reads, in one-letter code: Small ribosomal subunit protein uS2 (251 aa).

Residues 232 to 251 (EAIAEMDEQVEEDAEEASND) form a disordered region.

It belongs to the universal ribosomal protein uS2 family.

This chain is Small ribosomal subunit protein uS2, found in Chlorobaculum parvum (strain DSM 263 / NCIMB 8327) (Chlorobium vibrioforme subsp. thiosulfatophilum).